Consider the following 457-residue polypeptide: Protein N-terminal amidase (457 aa).

The CN hydrolase domain maps to 19 to 453 (LKVLVIQLNP…EGAILREVQF (435 aa)). Catalysis depends on glutamate 63, which acts as the Proton acceptor. Lysine 136 acts as the Proton donor in catalysis. Cysteine 187 acts as the Nucleophile in catalysis.

Belongs to the carbon-nitrogen hydrolase superfamily.

Functionally, deamidates N-terminal Asn and Gln. Component of a targeting complex in the N-end rule pathway. In Saccharomyces cerevisiae (strain ATCC 204508 / S288c) (Baker's yeast), this protein is Protein N-terminal amidase (NTA1).